A 639-amino-acid chain; its full sequence is Putative oxidoreductase UacF (639 aa).

5 4Fe-4S ferredoxin-type domains span residues 3-32 (KFIAAEAAECIGCHACEIACAVAHNQENWP), 47-77 (KGQAANPVACHHCNNAPCVTACPVNALTFQS), 78-107 (DSVQLDEQKCIGCKRCAIACPFGVVEMVDT), 110-139 (QKCDLCNQRSSGTQACIEVCPTQALRLMDD), and 201-235 (QQATYESDRCVYCAEKANCNWHCPLHNAIPDYIRL). The [4Fe-4S] cluster site is built by Cys12, Cys15, Cys18, Cys22, Cys56, Cys59, Cys64, Cys68, Cys87, Cys90, Cys93, Cys97, Cys112, Cys115, Cys125, Cys129, Cys210, Cys213, Cys219, and Cys223.

It depends on [4Fe-4S] cluster as a cofactor.

In terms of biological role, involved in formate-dependent uric acid degradation under microaerobic and anaerobic conditions. May reduce the enzymes necessary for uric acid degradation. This is Putative oxidoreductase UacF from Escherichia coli (strain K12).